The sequence spans 114 residues: Fluoride-specific ion channel FluC 1 (114 aa).

3 helical membrane passes run 23–43, 52–72, and 84–104; these read ATLT…SYVF, LSTA…TLSV, and FLAM…SHLG. Residues glycine 62 and threonine 65 each coordinate Na(+).

Belongs to the fluoride channel Fluc/FEX (TC 1.A.43) family.

It localises to the cell membrane. The enzyme catalyses fluoride(in) = fluoride(out). Na(+) is not transported, but it plays an essential structural role and its presence is essential for fluoride channel function. Functionally, fluoride-specific ion channel. Important for reducing fluoride concentration in the cell, thus reducing its toxicity. This Desulfitobacterium hafniense (strain Y51) protein is Fluoride-specific ion channel FluC 1.